Consider the following 96-residue polypeptide: Uteroglobin (96 aa).

The signal sequence occupies residues Met-1–Ser-21.

Belongs to the secretoglobin family. Antiparallel homodimer; disulfide-linked. Interaction with LMBR1L is controversial.

It is found in the secreted. Functionally, binds phosphatidylcholine, phosphatidylinositol, polychlorinated biphenyls (PCB) and weakly progesterone, potent inhibitor of phospholipase A2. This chain is Uteroglobin (SCGB1A1), found in Mesocricetus auratus (Golden hamster).